The chain runs to 337 residues: Holliday junction branch migration complex subunit RuvB (337 aa).

The interval 1-180 (MTRLISADKS…FGVISRLEFY (180 aa)) is large ATPase domain (RuvB-L). ATP-binding positions include L19, R20, G61, K64, T65, T66, 127–129 (EDF), R170, Y180, and R217. T65 is a binding site for Mg(2+). The tract at residues 181-251 (THEELAFIIT…VADQALALLE (71 aa)) is small ATPAse domain (RuvB-S). The segment at 254-337 (DMGFDMMDRA…APEPPQGKLF (84 aa)) is head domain (RuvB-H). R309 and R314 together coordinate DNA.

This sequence belongs to the RuvB family. Homohexamer. Forms an RuvA(8)-RuvB(12)-Holliday junction (HJ) complex. HJ DNA is sandwiched between 2 RuvA tetramers; dsDNA enters through RuvA and exits via RuvB. An RuvB hexamer assembles on each DNA strand where it exits the tetramer. Each RuvB hexamer is contacted by two RuvA subunits (via domain III) on 2 adjacent RuvB subunits; this complex drives branch migration. In the full resolvosome a probable DNA-RuvA(4)-RuvB(12)-RuvC(2) complex forms which resolves the HJ.

The protein resides in the cytoplasm. The enzyme catalyses ATP + H2O = ADP + phosphate + H(+). In terms of biological role, the RuvA-RuvB-RuvC complex processes Holliday junction (HJ) DNA during genetic recombination and DNA repair, while the RuvA-RuvB complex plays an important role in the rescue of blocked DNA replication forks via replication fork reversal (RFR). RuvA specifically binds to HJ cruciform DNA, conferring on it an open structure. The RuvB hexamer acts as an ATP-dependent pump, pulling dsDNA into and through the RuvAB complex. RuvB forms 2 homohexamers on either side of HJ DNA bound by 1 or 2 RuvA tetramers; 4 subunits per hexamer contact DNA at a time. Coordinated motions by a converter formed by DNA-disengaged RuvB subunits stimulates ATP hydrolysis and nucleotide exchange. Immobilization of the converter enables RuvB to convert the ATP-contained energy into a lever motion, pulling 2 nucleotides of DNA out of the RuvA tetramer per ATP hydrolyzed, thus driving DNA branch migration. The RuvB motors rotate together with the DNA substrate, which together with the progressing nucleotide cycle form the mechanistic basis for DNA recombination by continuous HJ branch migration. Branch migration allows RuvC to scan DNA until it finds its consensus sequence, where it cleaves and resolves cruciform DNA. This chain is Holliday junction branch migration complex subunit RuvB, found in Citrifermentans bemidjiense (strain ATCC BAA-1014 / DSM 16622 / JCM 12645 / Bem) (Geobacter bemidjiensis).